We begin with the raw amino-acid sequence, 381 residues long: Dynactin subunit 2 (381 aa).

Residues 15 to 39 (DQPDVYETPDAPESETSDFYDEEPA) are disordered. Acidic residues predominate over residues 24–39 (DAPESETSDFYDEEPA). Coiled-coil stretches lie at residues 100 to 216 (QKCL…AVGA) and 350 to 381 (GVQEAFAQNLENVNKEVKKLDERMKTLQEKVK).

This sequence belongs to the dynactin subunit 2 family. Subunit of dynactin, a multiprotein complex associated with dynein.

It is found in the cytoplasm. The protein localises to the cytoskeleton. The protein resides in the membrane. Modulates cytoplasmic dynein binding to an organelle, and plays a role in prometaphase chromosome alignment and spindle organization during mitosis. This chain is Dynactin subunit 2, found in Aedes aegypti (Yellowfever mosquito).